Reading from the N-terminus, the 147-residue chain is Cytochrome c-type biogenesis protein CcmE (147 aa).

Residues 1-9 are Cytoplasmic-facing; that stretch reads MKSLKKQRR. A helical; Signal-anchor for type II membrane protein membrane pass occupies residues 10-30; that stretch reads IQIIALATVALVGSTALIGYA. Residues 31-147 are Periplasmic-facing; that stretch reads MRDGINYFRS…EQGVYREGDS (117 aa). His-123 and Tyr-127 together coordinate heme.

This sequence belongs to the CcmE/CycJ family.

Its subcellular location is the cell inner membrane. Its function is as follows. Heme chaperone required for the biogenesis of c-type cytochromes. Transiently binds heme delivered by CcmC and transfers the heme to apo-cytochromes in a process facilitated by CcmF and CcmH. The chain is Cytochrome c-type biogenesis protein CcmE from Ruegeria sp. (strain TM1040) (Silicibacter sp.).